Here is a 543-residue protein sequence, read N- to C-terminus: Chaperonin GroEL (543 aa).

ATP contacts are provided by residues 30-33 (TLGP), K51, 87-91 (DGTTT), G415, and D496.

This sequence belongs to the chaperonin (HSP60) family. Forms a cylinder of 14 subunits composed of two heptameric rings stacked back-to-back. Interacts with the co-chaperonin GroES.

It localises to the cytoplasm. It carries out the reaction ATP + H2O + a folded polypeptide = ADP + phosphate + an unfolded polypeptide.. Together with its co-chaperonin GroES, plays an essential role in assisting protein folding. The GroEL-GroES system forms a nano-cage that allows encapsulation of the non-native substrate proteins and provides a physical environment optimized to promote and accelerate protein folding. This is Chaperonin GroEL from Gluconobacter oxydans (strain 621H) (Gluconobacter suboxydans).